The sequence spans 74 residues: Complement C5a anaphylatoxin (74 aa).

The segment at tyrosine 15–glycine 44 is involved in C5AR1 binding. 3 disulfide bridges follow: cysteine 21/cysteine 47, cysteine 22/cysteine 54, and cysteine 34/cysteine 55. An Anaphylatoxin-like domain is found at cysteine 21–cysteine 55. The interval leucine 72–arginine 74 is required for 90% of C5a activity; although Arg-74 is not essential.

Its subcellular location is the secreted. In terms of biological role, mediator of local inflammatory process released following cleavage by C5 convertase. Acts by binding to its receptor (C5AR1 or C5AR2), activating G protein-coupled receptor signaling and inducing a variety of responses including intracellular calcium release, contraction of smooth muscle, increased vascular permeability, and histamine release from mast cells and basophilic leukocytes. C5a is also a potent chemokine which stimulates the locomotion of polymorphonuclear leukocytes and directs their migration toward sites of inflammation. This is Complement C5a anaphylatoxin (C5) from Sus scrofa (Pig).